The primary structure comprises 183 residues: Orotate phosphoribosyltransferase (183 aa).

5-phospho-alpha-D-ribose 1-diphosphate-binding positions include R90, K91, K94, and 115–123 (DDVATTGGS). Orotate contacts are provided by T119 and R147.

The protein belongs to the purine/pyrimidine phosphoribosyltransferase family. PyrE subfamily. As to quaternary structure, homodimer. It depends on Mg(2+) as a cofactor.

It carries out the reaction orotidine 5'-phosphate + diphosphate = orotate + 5-phospho-alpha-D-ribose 1-diphosphate. It functions in the pathway pyrimidine metabolism; UMP biosynthesis via de novo pathway; UMP from orotate: step 1/2. In terms of biological role, catalyzes the transfer of a ribosyl phosphate group from 5-phosphoribose 1-diphosphate to orotate, leading to the formation of orotidine monophosphate (OMP). This Methanopyrus kandleri (strain AV19 / DSM 6324 / JCM 9639 / NBRC 100938) protein is Orotate phosphoribosyltransferase.